A 483-amino-acid chain; its full sequence is ATP synthase subunit beta (483 aa).

168 to 175 (GGAGVGKT) lines the ATP pocket.

This sequence belongs to the ATPase alpha/beta chains family. In terms of assembly, F-type ATPases have 2 components, CF(1) - the catalytic core - and CF(0) - the membrane proton channel. CF(1) has five subunits: alpha(3), beta(3), gamma(1), delta(1), epsilon(1). CF(0) has three main subunits: a(1), b(2) and c(9-12). The alpha and beta chains form an alternating ring which encloses part of the gamma chain. CF(1) is attached to CF(0) by a central stalk formed by the gamma and epsilon chains, while a peripheral stalk is formed by the delta and b chains.

The protein localises to the cell membrane. It carries out the reaction ATP + H2O + 4 H(+)(in) = ADP + phosphate + 5 H(+)(out). Functionally, produces ATP from ADP in the presence of a proton gradient across the membrane. The catalytic sites are hosted primarily by the beta subunits. In Mycobacterium ulcerans (strain Agy99), this protein is ATP synthase subunit beta.